Here is a 225-residue protein sequence, read N- to C-terminus: UPF0758 protein XCV4028 (225 aa).

An MPN domain is found at 102-224; sequence ALSDPPSVGR…PVSFAERGWL (123 aa). Positions 173, 175, and 186 each coordinate Zn(2+). Positions 173–186 match the JAMM motif motif; the sequence is HNHPSGNPEPSEAD.

The protein belongs to the UPF0758 family.

The sequence is that of UPF0758 protein XCV4028 from Xanthomonas euvesicatoria pv. vesicatoria (strain 85-10) (Xanthomonas campestris pv. vesicatoria).